The sequence spans 359 residues: N6-succino-2-amino-2'-deoxyadenylate synthase (359 aa).

The active-site Proton acceptor is serine 23. ATP is bound by residues serine 23, threonine 24, glycine 25, lysine 26, and glycine 27. Serine 23 is a binding site for dGMP. A Mg(2+)-binding site is contributed by serine 23. DGMP is bound at residue asparagine 49. ATP-binding residues include glycine 51, histidine 52, and threonine 53. Glycine 51 is a binding site for Mg(2+). Residues serine 131, threonine 132, and arginine 146 each coordinate dGMP. Glutamine 190 contributes to the ATP binding site. Residue threonine 205 participates in dGMP binding. Threonine 274 is a Mg(2+) binding site. L-aspartate-binding residues include threonine 274, valine 275, and arginine 280. ATP is bound by residues asparagine 305 and glutamine 308.

This sequence belongs to the Caudovirales PurZ family. Requires Mg(2+) as cofactor.

It carries out the reaction dGMP + L-aspartate + ATP = (2S)-2-amino-2'-deoxyadenylo-succinate + ADP + phosphate + 2 H(+). It functions in the pathway purine metabolism. Its function is as follows. Involved in the synthesis of the atypical nucleotide dZTP (2-amino-2'-deoxyadenosine-5'-triphosphate). Catalyzes the condensation of aspartate with deoxyguanylate into dSMP (N6-succino-2-amino-2'-deoxyadenylate), which undergoes defumarylation and phosphorylation respectively by host PurB and guanylate/nucleoside diphosphate kinases to give dZTP. dZTP is integrated into the viral genome instead of adenine by the viral DNA polymerase. This Z-base probably completely replaces adenosine and forms a triple bond to the opposite T-base. The resulting non-standard viral DNA is called Z-genome. The chemically modified DNA is probably harder for the host bacteria to digest with nucleases or restriction enzymes. The polypeptide is N6-succino-2-amino-2'-deoxyadenylate synthase (Cyanophage S-2L (Cyanobacteria phage S-2L)).